The sequence spans 618 residues: Mitochondrial Rho GTPase 2 (618 aa).

Residues 1–591 are Cytoplasmic-facing; sequence MKRDVRILLL…LNAVELGAAS (591 aa). The region spanning 2-168 is the Miro 1 domain; that stretch reads KRDVRILLLG…FYYAQKAVLH (167 aa). Gly16, Lys17, Thr18, and Ser19 together coordinate GTP. Thr18 is a binding site for Mg(2+). 2 residues coordinate Mg(2+): Pro35 and Asp57. Residues Ser59, Asn118, Lys119, Asp121, Ala149, and Lys150 each coordinate GTP. EF-hand domains follow at residues 184-219 and 304-339; these read ACSR…CFGN and LGYQ…FPCM. 8 residues coordinate Ca(2+): Asp197, Asp199, Asn201, Glu208, Asp317, Asp319, Asp321, and Glu328. Positions 416 to 579 constitute a Miro 2 domain; that stretch reads RNVFLCKVLG…YTKLATAATF (164 aa). Residues Gly428, Gly430, Lys431, Ser432, and Ala433 each coordinate GTP. Ser432 is a binding site for Mg(2+). Glu474 lines the Mg(2+) pocket. 3 residues coordinate GTP: Lys528, Asp530, and Cys559. The helical; Anchor for type IV membrane protein transmembrane segment at 592–614 threads the bilayer; the sequence is FWLRVALGAAVTALVGFTLYRVL. Residues 615–618 lie on the Mitochondrial intermembrane side of the membrane; sequence AKNK.

Belongs to the mitochondrial Rho GTPase family. As to quaternary structure, homodimer.

It localises to the mitochondrion outer membrane. The catalysed reaction is GTP + H2O = GDP + phosphate + H(+). It catalyses the reaction ATP + H2O = ADP + phosphate + H(+). It carries out the reaction UTP + H2O = UDP + phosphate + H(+). Its function is as follows. Atypical mitochondrial nucleoside-triphosphatase (NTPase) involved in mitochondrial trafficking. Probably involved in control of anterograde transport of mitochondria and their subcellular distribution. Can hydrolyze GTP, ATP and UTP. This is Mitochondrial Rho GTPase 2 (RHOT2) from Gallus gallus (Chicken).